Consider the following 368-residue polypeptide: uncharacterized protein (368 aa).

Functionally, might be involved in sporulation. This is an uncharacterized protein from Brachyspira hyodysenteriae (strain ATCC 49526 / WA1).